Here is a 196-residue protein sequence, read N- to C-terminus: Interferon lambda-3 (196 aa).

Positions 1–21 are cleaved as a signal peptide; it reads MTGDCMPVLVLMAAVLTVTGA. Disulfide bonds link C37–C136, C71–C169, and C188–C195.

This sequence belongs to the lambda interferon family.

It is found in the secreted. In terms of biological role, cytokine with antiviral, antitumour and immunomodulatory activities. Plays a critical role in the antiviral host defense, predominantly in the epithelial tissues. Acts as a ligand for the heterodimeric class II cytokine receptor composed of IL10RB and IFNLR1, and receptor engagement leads to the activation of the JAK/STAT signaling pathway resulting in the expression of IFN-stimulated genes (ISG), which mediate the antiviral state. Has a restricted receptor distribution and therefore restricted targets: is primarily active in epithelial cells and this cell type-selective action is because of the epithelial cell-specific expression of its receptor IFNLR1. Seems not to be essential for early virus-activated host defense in vaginal infection, but plays an important role in Toll-like receptor (TLR)-induced antiviral defense. Plays a significant role in the antiviral immune defense in the intestinal epithelium. Exerts an immunomodulatory effect by up-regulating MHC class I antigen expression. The polypeptide is Interferon lambda-3 (IFNL3) (Homo sapiens (Human)).